A 714-amino-acid polypeptide reads, in one-letter code: Mitochondrial division protein 1 (714 aa).

Residues 240-298 (LNIQKNSTLSEIRDIEVEVENLRQKKEKLLGKIANIEQNQLLLEDNLKQIDDRLDFLEE) adopt a coiled-coil conformation. Residues 323-354 (LKNDAIRNEGVTTESISSEASNLPPRRRQQLR) form a disordered region. The span at 332–343 (GVTTESISSEAS) shows a compositional bias: polar residues. Ser376 bears the Phosphoserine mark. WD repeat units follow at residues 396–436 (THDD…KIGE), 439–478 (GHLA…QLYQ), 500–539 (AHTD…QTID), 561–603 (TQRN…RTLK), 604–642 (GHTD…NKFH), 644–681 (YSAP…SWSC), and 685–714 (GNET…IWAV).

It belongs to the WD repeat MDV1/CAF4 family. As to quaternary structure, interacts with CAF4, DNM1 and FIS1, components of the mitochondrial fission machinery. Interacts via its N-terminal, coiled-coil extension (NTE) with FIS1, and via its WD repeats with DNM1.

The protein resides in the mitochondrion outer membrane. In terms of biological role, involved in mitochondrial fission. Has a partially redundant function to CAF4 in acting as an adapter protein, binding to FIS1 on the mitochondrial outer membrane and recruiting the dynamin-like GTPase DNM1 to form mitochondrial fission complexes. Formation of these complexes is required to promote constriction and fission of the mitochondrial compartment at a late step in mitochondrial division. The chain is Mitochondrial division protein 1 (MDV1) from Saccharomyces cerevisiae (strain ATCC 204508 / S288c) (Baker's yeast).